A 442-amino-acid polypeptide reads, in one-letter code: D-serine dehydratase (442 aa).

Position 118 is an N6-(pyridoxal phosphate)lysine (Lys-118).

This sequence belongs to the serine/threonine dehydratase family. DsdA subfamily. In terms of assembly, monomer. Pyridoxal 5'-phosphate serves as cofactor.

It catalyses the reaction D-serine = pyruvate + NH4(+). The polypeptide is D-serine dehydratase (Citrobacter koseri (strain ATCC BAA-895 / CDC 4225-83 / SGSC4696)).